The chain runs to 297 residues: 4-hydroxy-tetrahydrodipicolinate synthase (297 aa).

Thr51 is a pyruvate binding site. The active-site Proton donor/acceptor is Tyr139. The active-site Schiff-base intermediate with substrate is the Lys167. Val209 provides a ligand contact to pyruvate.

This sequence belongs to the DapA family. As to quaternary structure, homotetramer; dimer of dimers.

The protein resides in the cytoplasm. The catalysed reaction is L-aspartate 4-semialdehyde + pyruvate = (2S,4S)-4-hydroxy-2,3,4,5-tetrahydrodipicolinate + H2O + H(+). It functions in the pathway amino-acid biosynthesis; L-lysine biosynthesis via DAP pathway; (S)-tetrahydrodipicolinate from L-aspartate: step 3/4. Catalyzes the condensation of (S)-aspartate-beta-semialdehyde [(S)-ASA] and pyruvate to 4-hydroxy-tetrahydrodipicolinate (HTPA). In Albidiferax ferrireducens (strain ATCC BAA-621 / DSM 15236 / T118) (Rhodoferax ferrireducens), this protein is 4-hydroxy-tetrahydrodipicolinate synthase.